Reading from the N-terminus, the 310-residue chain is Beta-lactamase AST-1 (310 aa).

Positions 1 to 31 are cleaved as a signal peptide; that stretch reads MTFSALPFRRADRRRLLAAALAACALTLTAA. C32 carries the N-palmitoyl cysteine lipid modification. C32 carries S-diacylglycerol cysteine lipidation. S91 functions as the Acyl-ester intermediate in the catalytic mechanism. S151 lines the substrate pocket. E187 serves as the catalytic Proton acceptor. Residue 255–257 coordinates substrate; it reads KTG.

This sequence belongs to the class-A beta-lactamase family.

Its subcellular location is the cell membrane. The catalysed reaction is a beta-lactam + H2O = a substituted beta-amino acid. With respect to regulation, inhibited by clavulanic acid. In terms of biological role, confers high levels of resistance to amoxicillin, benzylpenicillin, piperacillin, ticarcillin and cephalothin. Not active against ceftazidime, cefotaxime and aztreonam. The chain is Beta-lactamase AST-1 (bla) from Nocardia asteroides.